A 258-amino-acid polypeptide reads, in one-letter code: MLLGVNIDHIAVLREARKVADPDPLDALGICKRARADQITIHLREDRRHMHDMDAKNIIELSALPVNLECATEPSMIDIACRLRPHRVTLVPEKREEVTTEGGLAVTGEQTRLQEAIKRLQEKEIEVSLFIDPASDAVKASSDLGVEWIEFHTGKYANIYAMLYSNLSKTHHSIPELKLPRSVLKKMLEEELESLSALSAEARVLGLKVAAGHGLNYHNVQAVAQIEEIEELNIGQSIIARSVYTGLEQAILDMKSLL.

N6 lines the 3-amino-2-oxopropyl phosphate pocket. 8 to 9 (DH) is a binding site for 1-deoxy-D-xylulose 5-phosphate. R17 is a 3-amino-2-oxopropyl phosphate binding site. H42 serves as the catalytic Proton acceptor. 1-deoxy-D-xylulose 5-phosphate is bound by residues R44 and H49. Residue E69 is the Proton acceptor of the active site. T99 lines the 1-deoxy-D-xylulose 5-phosphate pocket. The Proton donor role is filled by H213. Residues G214 and 235–236 (GQ) contribute to the 3-amino-2-oxopropyl phosphate site.

The protein belongs to the PNP synthase family. Homooctamer; tetramer of dimers.

The protein resides in the cytoplasm. The enzyme catalyses 3-amino-2-oxopropyl phosphate + 1-deoxy-D-xylulose 5-phosphate = pyridoxine 5'-phosphate + phosphate + 2 H2O + H(+). It functions in the pathway cofactor biosynthesis; pyridoxine 5'-phosphate biosynthesis; pyridoxine 5'-phosphate from D-erythrose 4-phosphate: step 5/5. Its function is as follows. Catalyzes the complicated ring closure reaction between the two acyclic compounds 1-deoxy-D-xylulose-5-phosphate (DXP) and 3-amino-2-oxopropyl phosphate (1-amino-acetone-3-phosphate or AAP) to form pyridoxine 5'-phosphate (PNP) and inorganic phosphate. In Sulfurovum sp. (strain NBC37-1), this protein is Pyridoxine 5'-phosphate synthase.